The sequence spans 642 residues: Threonine--tRNA ligase (642 aa).

Residues 1 to 61 (MPVITLPDGS…DTDSELSIIT (61 aa)) enclose the TGS domain. The tract at residues 243 to 534 (DHRKIGKQLD…LIEEYAGKFP (292 aa)) is catalytic. Residues Cys334, His385, and His511 each contribute to the Zn(2+) site.

Belongs to the class-II aminoacyl-tRNA synthetase family. Homodimer. The cofactor is Zn(2+).

It is found in the cytoplasm. The catalysed reaction is tRNA(Thr) + L-threonine + ATP = L-threonyl-tRNA(Thr) + AMP + diphosphate + H(+). Its function is as follows. Catalyzes the attachment of threonine to tRNA(Thr) in a two-step reaction: L-threonine is first activated by ATP to form Thr-AMP and then transferred to the acceptor end of tRNA(Thr). Also edits incorrectly charged L-seryl-tRNA(Thr). This Shewanella sediminis (strain HAW-EB3) protein is Threonine--tRNA ligase.